The primary structure comprises 657 residues: Probable potassium transport system protein Kup (657 aa).

Helical transmembrane passes span 15-35 (SFLIALGVVYGDIGTSPLYVM), 48-68 (ITPDFILGVLSLIFWTMTLLT), 100-120 (WLIIPAMVGGSALLADGMLTP), 147-167 (IIIIIVLVILSFLFFIQHFGT), 173-193 (IFGPVMFIWFAFLAILGIVNL), 219-239 (LGFFILGGVFLSTTGAEALYS), 251-271 (LTWPLVKICLLLNYFGQAAWI), 292-312 (MMPSWLLLFGVLISTLAAIIA), 348-368 (IYMPAINRILWIACIAIVLYF), 378-398 (YGLSITVTMLMTSILLFNYLL), 403-423 (PLPIALIILVFFSSLEFSFLI), and 431-451 (KGGFVSVLIALCILSIMYIWI).

Belongs to the HAK/KUP transporter (TC 2.A.72) family.

The protein resides in the cell membrane. The enzyme catalyses K(+)(in) + H(+)(in) = K(+)(out) + H(+)(out). Functionally, transport of potassium into the cell. Likely operates as a K(+):H(+) symporter. This chain is Probable potassium transport system protein Kup, found in Clostridium perfringens (strain SM101 / Type A).